Here is a 165-residue protein sequence, read N- to C-terminus: Large ribosomal subunit protein uL10 (165 aa).

Belongs to the universal ribosomal protein uL10 family. As to quaternary structure, part of the ribosomal stalk of the 50S ribosomal subunit. The N-terminus interacts with L11 and the large rRNA to form the base of the stalk. The C-terminus forms an elongated spine to which L12 dimers bind in a sequential fashion forming a multimeric L10(L12)X complex.

In terms of biological role, forms part of the ribosomal stalk, playing a central role in the interaction of the ribosome with GTP-bound translation factors. This chain is Large ribosomal subunit protein uL10, found in Burkholderia ambifaria (strain MC40-6).